A 111-amino-acid polypeptide reads, in one-letter code: uncharacterized protein (111 aa).

Residues 1-85 (MTGLMKAFQK…TSSREDEQKL (85 aa)) are disordered. The segment covering 11-23 (LSPTKRQYAEITQ) has biased composition (polar residues). Positions 24–42 (SNSSISSSSSGSKYNDSSS) are enriched in low complexity. Residues 56-77 (ARASTSTQAQKPASSQQKGGTS) show a composition bias toward polar residues.

This is an uncharacterized protein from Microplitis demolitor (Parasitoid wasp).